Here is a 305-residue protein sequence, read N- to C-terminus: Ribosomal RNA large subunit methyltransferase F (305 aa).

It belongs to the methyltransferase superfamily. METTL16/RlmF family.

It is found in the cytoplasm. It carries out the reaction adenosine(1618) in 23S rRNA + S-adenosyl-L-methionine = N(6)-methyladenosine(1618) in 23S rRNA + S-adenosyl-L-homocysteine + H(+). Its function is as follows. Specifically methylates the adenine in position 1618 of 23S rRNA. The sequence is that of Ribosomal RNA large subunit methyltransferase F from Enterobacter sp. (strain 638).